An 86-amino-acid polypeptide reads, in one-letter code: Small ribosomal subunit protein uS15 (86 aa).

This sequence belongs to the universal ribosomal protein uS15 family. In terms of assembly, part of the 30S ribosomal subunit. Forms a bridge to the 50S subunit in the 70S ribosome, contacting the 23S rRNA.

Its function is as follows. One of the primary rRNA binding proteins, it binds directly to 16S rRNA where it helps nucleate assembly of the platform of the 30S subunit by binding and bridging several RNA helices of the 16S rRNA. Forms an intersubunit bridge (bridge B4) with the 23S rRNA of the 50S subunit in the ribosome. The protein is Small ribosomal subunit protein uS15 of Ruthia magnifica subsp. Calyptogena magnifica.